The following is a 293-amino-acid chain: Protease HtpX (293 aa).

2 helical membrane-spanning segments follow: residues 4–24 and 34–54; these read IALFLLTNLAVMVVFGLVLSL and GLMIMALLFGFGGSFVSLLMS. A Zn(2+)-binding site is contributed by histidine 139. Glutamate 140 is an active-site residue. Histidine 143 contacts Zn(2+). 2 consecutive transmembrane segments (helical) span residues 158–178 and 193–213; these read VVNTFVIFISRILAQLAAGFM and LIYFAVATVLELVFGILASII. Glutamate 222 contacts Zn(2+).

It belongs to the peptidase M48B family. It depends on Zn(2+) as a cofactor.

The protein resides in the cell inner membrane. The polypeptide is Protease HtpX (Escherichia coli O127:H6 (strain E2348/69 / EPEC)).